The sequence spans 216 residues: MPTPHEAEKQHTGPEEADRPPSMSSHDAAPSGPPSRNPCCLCWCCCCSCSWNQERQRAWQVSRESKLQPLPSCEVCTPPSPEEVQSWAQSFDKLMHSPTGRSVFRAFLRTEYSEENMLFWLACEELKTEADRHVVDEKARLIYEDYVSILSPKEVSLDSRVREGINRKMQEPSPHTFDDAQLQIYTLMHRDSYPRFLTSPTYRSLLLQGAPQSSEA.

The span at 1–19 shows a compositional bias: basic and acidic residues; the sequence is MPTPHEAEKQHTGPEEADR. The disordered stretch occupies residues 1–30; the sequence is MPTPHEAEKQHTGPEEADRPPSMSSHDAAP. Serine 24 bears the Phosphoserine; by CK2 mark. The RGS domain occupies 90–206; sequence SFDKLMHSPT…LTSPTYRSLL (117 aa). Residue serine 97 is modified to Phosphoserine. Serine 151 carries the post-translational modification Phosphoserine; by MAPK1 and MAPK3. The interaction with GIPC stretch occupies residues 207–216; the sequence is LQGAPQSSEA.

In terms of assembly, interacts with GIPC PDZ domain. Interacts with GNAO1. In terms of processing, fatty acylated. Heavily palmitoylated in the cysteine string motif. Post-translationally, phosphorylated, mainly on serine residues.

Its subcellular location is the membrane. In terms of biological role, inhibits signal transduction by increasing the GTPase activity of G protein alpha subunits thereby driving them into their inactive GDP-bound form. Binds to G-alpha subfamily 1 members, predominantly to G(i)-alpha-3. Activity on G(z)-alpha is inhibited by phosphorylation and palmitoylation of the G-protein. This Rattus norvegicus (Rat) protein is Regulator of G-protein signaling 19 (Rgs19).